Here is a 484-residue protein sequence, read N- to C-terminus: Trigger factor (484 aa).

The PPIase FKBP-type domain maps to 162-243 (GDFISIDLSA…VKSVKERELP (82 aa)). A disordered region spans residues 427–484 (DGNTIDTSEFFGKPPENDVTDLLDDDADGDAGVDADGDTENSAEPADADSADTAQGAG). Positions 444 to 476 (DVTDLLDDDADGDAGVDADGDTENSAEPADADS) are enriched in acidic residues.

This sequence belongs to the FKBP-type PPIase family. Tig subfamily.

The protein resides in the cytoplasm. It catalyses the reaction [protein]-peptidylproline (omega=180) = [protein]-peptidylproline (omega=0). Its function is as follows. Involved in protein export. Acts as a chaperone by maintaining the newly synthesized protein in an open conformation. Functions as a peptidyl-prolyl cis-trans isomerase. The chain is Trigger factor from Mycobacterium ulcerans (strain Agy99).